The chain runs to 310 residues: tRNA dimethylallyltransferase (310 aa).

24–31 (GPTASGKT) is a binding site for ATP. A substrate-binding site is contributed by 26 to 31 (TASGKT). Positions 49–52 (DSRQ) are interaction with substrate tRNA.

Belongs to the IPP transferase family. As to quaternary structure, monomer. It depends on Mg(2+) as a cofactor.

The catalysed reaction is adenosine(37) in tRNA + dimethylallyl diphosphate = N(6)-dimethylallyladenosine(37) in tRNA + diphosphate. Functionally, catalyzes the transfer of a dimethylallyl group onto the adenine at position 37 in tRNAs that read codons beginning with uridine, leading to the formation of N6-(dimethylallyl)adenosine (i(6)A). This chain is tRNA dimethylallyltransferase, found in Synechococcus sp. (strain WH7803).